The primary structure comprises 116 residues: Large ribosomal subunit protein uL18 (116 aa).

The protein belongs to the universal ribosomal protein uL18 family. In terms of assembly, part of the 50S ribosomal subunit; part of the 5S rRNA/L5/L18/L25 subcomplex. Contacts the 5S and 23S rRNAs.

Functionally, this is one of the proteins that bind and probably mediate the attachment of the 5S RNA into the large ribosomal subunit, where it forms part of the central protuberance. The polypeptide is Large ribosomal subunit protein uL18 (Pseudomonas syringae pv. tomato (strain ATCC BAA-871 / DC3000)).